We begin with the raw amino-acid sequence, 217 residues long: Cytidylate kinase (217 aa).

11 to 19 (GPAGAGKST) is an ATP binding site.

The protein belongs to the cytidylate kinase family. Type 1 subfamily.

Its subcellular location is the cytoplasm. It catalyses the reaction CMP + ATP = CDP + ADP. It carries out the reaction dCMP + ATP = dCDP + ADP. This Clostridium perfringens (strain SM101 / Type A) protein is Cytidylate kinase.